Reading from the N-terminus, the 451-residue chain is Heme sensor protein HssS (451 aa).

A run of 2 helical transmembrane segments spans residues 9-29 (IAIYAITVILFSALMSFLFTN) and 164-184 (IFLAVLITLLLIISISLVIAS). One can recognise an HAMP domain in the interval 186 to 238 (YSIIKPVTALKNATTRIMKGDFSTPIKQTRHDEIGTLQSRFNTMRQNLGQVDQ). One can recognise a Histidine kinase domain in the interval 246-451 (NVSHEIKTPL…KTQFIVKLFI (206 aa)). The residue at position 249 (histidine 249) is a Phosphohistidine; by autocatalysis.

Autophosphorylated.

The protein resides in the cell membrane. The catalysed reaction is ATP + protein L-histidine = ADP + protein N-phospho-L-histidine.. In terms of biological role, member of the two-component regulatory system HssS/HssR involved in intracellular heme homeostasis and tempering of staphylococcal virulence. HssS functions as a heme sensor histidine kinase which is autophosphorylated at a histidine residue and transfers its phosphate group to an aspartate residue of HssR. HssR/HssS activates the expression of HrtAB, an efflux pump, in response to extracellular heme, hemin, hemoglobin or blood. This Staphylococcus epidermidis (strain ATCC 12228 / FDA PCI 1200) protein is Heme sensor protein HssS (hssS).